We begin with the raw amino-acid sequence, 229 residues long: uncharacterized protein (229 aa).

The stretch at 66-94 (GHEKLQIQSALRDIESAENQARVQQCNAK) forms a coiled coil.

This is an uncharacterized protein from Ostreid herpesvirus 1 (isolate France) (OsHV-1).